A 441-amino-acid polypeptide reads, in one-letter code: Malate dehydrogenase [NADP], chloroplastic (441 aa).

The transit peptide at 1-51 (MAVAELSPSYKTQLKTCQQLSSSLSTRLSDHRKFSLRLLPRPVSVRGGIRC) directs the protein to the chloroplast. The cysteines at positions 75 and 80 are disulfide-linked. 104 to 110 (GAAGMIS) lines the NADP(+) pocket. Residues R185 and R191 each coordinate substrate. NADP(+) is bound at residue N198. Q205 serves as a coordination point for NAD(+). 222 to 224 (VGN) is an NADP(+) binding site. N224 and R255 together coordinate substrate. H280 functions as the Proton acceptor in the catalytic mechanism. C416 and C428 are disulfide-bonded.

Belongs to the LDH/MDH superfamily. MDH type 2 family. In terms of assembly, homodimer.

It is found in the plastid. The protein resides in the chloroplast. The catalysed reaction is (S)-malate + NADP(+) = oxaloacetate + NADPH + H(+). With respect to regulation, chloroplast NADP-MDH is activated upon illumination. In order to be enzymatically active, disulfide bridges on the protein must be reduced by thioredoxin which receives electrons from ferredoxin and the electron transport system of photosynthesis. The chloroplastic, NADP-dependent form is essential for the photosynthesis C4 cycle, which allows plants to circumvent the problem of photorespiration. In C4 plants, NADP-MDH activity acts to convert oxaloacetate to malate in chloroplasts of mesophyll cells for transport to the bundle sheath cells. In Mesembryanthemum crystallinum (Common ice plant), this protein is Malate dehydrogenase [NADP], chloroplastic (MDH1).